We begin with the raw amino-acid sequence, 872 residues long: Metabotropic glutamate receptor 2 (872 aa).

Positions 1–18 (MGSLLALLALLLLWGAVA) are cleaved as a signal peptide. The Extracellular segment spans residues 19–567 (EGPAKKVLTL…QEYIRWGDAW (549 aa)). Residues Cys50 and Cys92 are joined by a disulfide bond. L-glutamate contacts are provided by Arg57, Arg61, Ser145, Ala166, and Thr168. Residues Asn203 and Asn286 are each glycosylated (N-linked (GlcNAc...) asparagine). Cystine bridges form between Cys234–Cys518, Cys355–Cys362, Cys400–Cys407, Cys500–Cys519, Cys504–Cys522, Cys525–Cys537, and Cys540–Cys553. Asp295 lines the L-glutamate pocket. Asn338 carries N-linked (GlcNAc...) asparagine glycosylation. Lys377 is an L-glutamate binding site. Asn402 carries an N-linked (GlcNAc...) asparagine glycan. N-linked (GlcNAc...) asparagine glycosylation occurs at Asn547. The chain crosses the membrane as a helical span at residues 568 to 590 (AVGPVTIACLGALATLFVLGVFV). The Cytoplasmic portion of the chain corresponds to 591–604 (RHNATPVVKASGRE). Residues 605–625 (LCYILLGGVFLCYCMTFIFIA) traverse the membrane as a helical segment. The Extracellular portion of the chain corresponds to 626-636 (KPSTAVCTLRR). A disulfide bridge links Cys632 with Cys721. A helical membrane pass occupies residues 637–655 (LGLGTAFSVCYSALLTKTN). The Cytoplasmic portion of the chain corresponds to 656 to 679 (RIARIFGGAREGAQRPRFISPASQ). Residues 677–685 (ASQVAICLA) are important for interaction with HTR2A. A helical membrane pass occupies residues 680–700 (VAICLALISGQLLIVVAWLVV). At 701-725 (EAPGTGKETAPERREVVTLRCNHRD) the chain is on the extracellular side. A helical transmembrane segment spans residues 726 to 747 (ASMLGSLAYNVLLIALCTLYAF). Topologically, residues 748–760 (KTRKCPENFNEAK) are cytoplasmic. The chain crosses the membrane as a helical span at residues 761–783 (FIGFTMYTTCIIWLAFLPIFYVT). At 784 to 793 (SSDYRVQTTT) the chain is on the extracellular side. The helical transmembrane segment at 794–819 (MCVSVSLSGSVVLGCLFAPKLHIILF) threads the bilayer. Over 820–872 (QPQKNVVSHRAPTSRFGSAAARASSSLGQGSGSQFVPTVCNGREVVDSTTSSL) the chain is Cytoplasmic.

Belongs to the G-protein coupled receptor 3 family. In terms of assembly, forms heterodimers with GRM3 or GRM4. Interacts with TAMALIN. Interacts with HTR2A. As to quaternary structure, (Microbial infection) Interacts with H5N6 virus protein HA. (Microbial infection) Interacts with rabies virus protein G. In terms of assembly, (Microbial infection) Interacts with SARS-CoV-2 virus spike protein S. Detected in brain cortex (at protein level). Widely expressed in different regions of the adult brain as well as in fetal brain.

It is found in the cell membrane. It localises to the synapse. The protein resides in the cell projection. The protein localises to the dendrite. Dimeric G protein-coupled receptor which is activated by the excitatory neurotransmitter L-glutamate. Plays critical roles in modulating synaptic transmission and neuronal excitability. Upon activation by glutamate, inhibits presynaptic calcium channels, reducing further glutamate release and dampening excitatory signaling. Mechanistically, ligand binding causes a conformation change that triggers signaling via guanine nucleotide-binding proteins (G proteins) and modulates the activity of down-stream effectors, such as adenylate cyclase. May mediate suppression of neurotransmission or may be involved in synaptogenesis or synaptic stabilization. Its function is as follows. (Microbial infection) Plays an important role in influenza virus internalization. Functionally, (Microbial infection) Acts as a host entry factor for rabies virus that hijacks the endocytosis of GRM2 to enter cells. In terms of biological role, (Microbial infection) Acts as a host entry factor for SARS-CoV-2 that hijacks the endocytosis of GRM2 to enter cells. This Homo sapiens (Human) protein is Metabotropic glutamate receptor 2.